The primary structure comprises 434 residues: Enolase (434 aa).

Q163 contributes to the (2R)-2-phosphoglycerate binding site. E205 (proton donor) is an active-site residue. Residues D242, E291, and D318 each contribute to the Mg(2+) site. (2R)-2-phosphoglycerate is bound by residues K343, R372, S373, and K394. The active-site Proton acceptor is the K343.

The protein belongs to the enolase family. Mg(2+) serves as cofactor.

The protein localises to the cytoplasm. The protein resides in the secreted. It localises to the cell surface. The catalysed reaction is (2R)-2-phosphoglycerate = phosphoenolpyruvate + H2O. It functions in the pathway carbohydrate degradation; glycolysis; pyruvate from D-glyceraldehyde 3-phosphate: step 4/5. Catalyzes the reversible conversion of 2-phosphoglycerate (2-PG) into phosphoenolpyruvate (PEP). It is essential for the degradation of carbohydrates via glycolysis. This is Enolase from Streptococcus thermophilus (strain CNRZ 1066).